The following is a 257-amino-acid chain: uncharacterized protein (257 aa).

The N-terminal stretch at 1-22 (MRYLKRLSWYISILILIVVIAG) is a signal peptide. Cys-23 carries N-palmitoyl cysteine lipidation. Residue Cys-23 is the site of S-diacylglycerol cysteine attachment.

Belongs to the staphylococcal tandem lipoprotein family.

Its subcellular location is the cell membrane. This is an uncharacterized protein from Staphylococcus aureus (strain N315).